We begin with the raw amino-acid sequence, 167 residues long: Respiratory supercomplex factor 1-A, mitochondrial (167 aa).

Residues 1–86 enclose the HIG1 domain; the sequence is MCSDFEEETS…TERKQRREFE (86 aa). 2 helical membrane-spanning segments follow: residues 21–38 and 53–75; these read EPLI…LYRA and MFRA…GMYY. Residues 75-107 are a coiled coil; sequence YKTERKQRREFEKKVEERKAQEKRDAWLRELEA.

Belongs to the RCF1 family. In terms of assembly, associates with the respiratory chain complex III/complex IV supercomplex.

Its subcellular location is the mitochondrion membrane. Functionally, cytochrome c oxidase subunit which plays a role in assembly of respiratory supercomplexes. This Talaromyces marneffei (strain ATCC 18224 / CBS 334.59 / QM 7333) (Penicillium marneffei) protein is Respiratory supercomplex factor 1-A, mitochondrial (rcf1-A).